The primary structure comprises 2253 residues: Genome polyprotein (2253 aa).

Residues Cys-627 and Cys-694 are joined by a disulfide bond. A Cell attachment site motif is present at residues 750-752; sequence RVD. Residues 825–920 form the LRAT domain; the sequence is LVYKNRGFYK…LFPGRKEITQ (96 aa). Residues His-835 and His-846 each act as for protein 2A H-NC in the active site. The active-site For protein 2A H-NC; Acyl-thioester intermediate is the Cys-904. Residues 1002 to 1022 form a helical membrane-spanning segment; the sequence is IVLYCHAPNMLTTMCLGTLLV. The SF3 helicase domain occupies 1205–1366; it reads YSEMMRVNVR…ASYSRNNKLD (162 aa). O-(5'-phospho-RNA)-tyrosine is present on Tyr-1559. Positions 1586–1775 constitute a Peptidase C3 domain; sequence APYMQDLEHC…RAAAVHFISN (190 aa). Catalysis depends on for protease 3C activity residues His-1626, Asp-1664, and Cys-1739. Cys-1970 serves as the catalytic Acyl-thioester intermediate. In terms of domain architecture, RdRp catalytic spans 2018 to 2132; that stretch reads PYNYGLDYSS…SVSSPLDAEY (115 aa). Mg(2+) contacts are provided by Asp-2024 and Asp-2118.

This sequence belongs to the picornaviruses polyprotein family. Interacts with capsid protein VP1 and capsid protein VP3 to form heterotrimeric protomers. Five protomers subsequently associate to form pentamers which serve as building blocks for the capsid. As to quaternary structure, interacts with capsid protein VP0, and capsid protein VP3 to form heterotrimeric protomers. Five protomers subsequently associate to form pentamers which serve as building blocks for the capsid. In terms of assembly, interacts with capsid protein VP0 and capsid protein VP1 to form heterotrimeric protomers. Five protomers subsequently associate to form pentamers which serve as building blocks for the capsid. Homohexamer; forms a hexameric ring structure with 6-fold symmetry characteristic of AAA+ ATPases. As to quaternary structure, homodimer. Interacts with host ACBD3. In terms of assembly, interacts with RNA-directed RNA polymerase. Interacts with Viral protein genome-linked. The cofactor is Mg(2+). In terms of processing, VPg is uridylylated by the polymerase and is covalently linked to the 5'-end of genomic RNA. This uridylylated form acts as a nucleotide-peptide primer for the polymerase. Post-translationally, specific enzymatic cleavages yield mature proteins. All cleavages are catalyzed by P3C.

The protein resides in the virion. It localises to the host cytoplasm. Its subcellular location is the host nucleus. The protein localises to the host nucleolus. It is found in the host cytoplasmic vesicle membrane. The protein resides in the host endoplasmic reticulum membrane. It localises to the host Golgi apparatus membrane. The enzyme catalyses RNA(n) + a ribonucleoside 5'-triphosphate = RNA(n+1) + diphosphate. It catalyses the reaction a ribonucleoside 5'-triphosphate + H2O = a ribonucleoside 5'-diphosphate + phosphate + H(+). It carries out the reaction Selective cleavage of Gln-|-Gly bond in the poliovirus polyprotein. In other picornavirus reactions Glu may be substituted for Gln, and Ser or Thr for Gly.. In terms of biological role, forms an icosahedral capsid of pseudo T=3 symmetry together with capsid proteins VP1 and VP3. The capsid is 300 Angstroms in diameter, composed of 60 copies of each capsid protein and enclosing the viral positive strand RNA genome. The attachment to the host cell receptor induces virion internalization predominantly through clathrin-mediated endocytosis. Binds packaging signals present in the viral RNA. Functionally, forms an icosahedral capsid of pseudo T=3 symmetry together with capsid proteins VP0 and VP1. The capsid is 300 Angstroms in diameter, composed of 60 copies of each capsid protein and enclosing the viral positive strand RNA genome. The attachment to the host cell receptor induces virion internalization predominantly through clathrin-mediated endocytosis. Binds packaging signals present in the viral RNA. Forms an icosahedral capsid of pseudo T=3 symmetry together with capsid proteins VP0 and VP3. The capsid is 300 Angstroms in diameter, composed of 60 copies of each capsid protein and enclosing the viral positive strand RNA genome. The attachment to the host cell receptor induces virion internalization predominantly through clathrin-mediated endocytosis. Binds packaging signals present in the viral RNA. Its function is as follows. Mediates self-processing of the polyprotein by a translational effect termed 'ribosome skipping'. Mechanistically, 2A1-mediated cleavage occurs between the C-terminal glycine and the proline of the downstream protein 2A2. In terms of biological role, plays an essential role in the virus replication cycle by acting as a viroporin. Creates a pore in the host endoplasmic reticulum and as a consequence releases Ca2+ in the cytoplasm of infected cell. In turn, high levels of cytoplasmic calcium may trigger membrane trafficking and transport of viral ER-associated proteins to viroplasms, sites of viral genome replication. Functionally, induces and associates with structural rearrangements of intracellular membranes. Displays RNA-binding, nucleotide binding and NTPase activities. May play a role in virion morphogenesis and viral RNA encapsidation by interacting with the capsid protein VP3. Localizes the viral replication complex to the surface of membranous vesicles. It inhibits host cell endoplasmic reticulum-to-Golgi apparatus transport and causes the disassembly of the Golgi complex, possibly through GBF1 interaction. This would result in depletion of MHC, trail receptors and IFN receptors at the host cell surface. Plays an essential role in viral RNA replication by recruiting ACBD3 and PI4KB at the viral replication sites, thereby allowing the formation of the rearranged membranous structures where viral replication takes place. Its function is as follows. Acts as a primer for viral RNA replication and remains covalently bound to viral genomic RNA. VPg is uridylylated prior to priming replication into VPg-pUpU. The VPg-pUpU is then used as primer on the genomic RNA poly(A) by the RNA-dependent RNA polymerase to replicate the viral genome. Following genome release from the infecting virion in the cytoplasm, the VPg-RNA linkage is probably removed by host TDP2. During the late stage of the replication cycle, host TDP2 is excluded from sites of viral RNA synthesis and encapsidation, allowing for the generation of progeny virions. In terms of biological role, cysteine protease that generates mature viral proteins from the precursor polyprotein. In addition to its proteolytic activity, it binds to viral RNA, and thus influences viral genome replication. RNA and substrate bind cooperatively to the protease. Functionally, replicates the viral genomic RNA on the surface of intracellular membranes. Covalently attaches UMP to a tyrosine of VPg, which is used to prime RNA synthesis. The positive stranded RNA genome is first replicated at virus induced membranous vesicles, creating a dsRNA genomic replication form. This dsRNA is then used as template to synthesize positive stranded RNA genomes. ss(+)RNA genomes are either translated, replicated or encapsidated. The polypeptide is Genome polyprotein (Ljunganvirus 1 (LV)).